The following is a 283-amino-acid chain: 32 kDa beta-galactoside-binding lectin (283 aa).

2 Galectin domains span residues 17-148 (YRSL…VHWG) and 156-283 (YESG…IQIQ). Residue 217 to 223 (WGNEERE) participates in a beta-D-galactoside binding.

In terms of assembly, (Microbial infection) Interacts (via domain galectin 2) with goat TMEM147. Interacts (via domain galectin 1) with goat TMEM63A.

Its subcellular location is the membrane. Binds galactose. Exerts immunomodulatory effects on host peripheral blood mononuclear cells to down-regulate host immune response. Hemagglutinates human, dog, rabbit, chicken and mouse erythrocytes but does not hemagglutinate the erythrocytes of goat, its natural host. The protein is 32 kDa beta-galactoside-binding lectin (GAL-1) of Haemonchus contortus (Barber pole worm).